A 313-amino-acid polypeptide reads, in one-letter code: Glutathionyl-hydroquinone reductase PcpF (313 aa).

Cysteine 53 (nucleophile) is an active-site residue. Glutathione-binding positions include tryptophan 86, 119-122 (RVTI), and 137-138 (ES). A GST C-terminal domain is found at 161-285 (PAEFRPEIDR…INLRHAKAHY (125 aa)). Tyrosine 184 acts as the Proton donor/acceptor in catalysis.

It belongs to the GST superfamily. Xi-class GSH transferase family. In terms of assembly, homodimer.

The catalysed reaction is 2-(glutathione-S-yl)-hydroquinone + glutathione = hydroquinone + glutathione disulfide. Functionally, catalyzes glutathione (GSH)-dependent reduction of glutathionyl-hydroquinones (GS-HQs) to the corresponding hydroquinones. Can act on halogenated substrates such as GS-2,6-dichloro-p-hydroquinone (GS-DiCH) and GS-trichloro-p-hydroquinone (GS-TriCH). Involved in the degradation of pentachlorophenol (PCP), a toxic pollutant. In Sphingobium chlorophenolicum, this protein is Glutathionyl-hydroquinone reductase PcpF.